The primary structure comprises 176 residues: Disulfide bond formation protein B (176 aa).

Residues 1–13 lie on the Cytoplasmic side of the membrane; that stretch reads MQFLNTFSKSRIS. The chain crosses the membrane as a helical span at residues 14–30; it reads WLLLLLCIVFFEGSALF. The Periplasmic portion of the chain corresponds to 31-48; sequence FQHGMKLGPCVMCIYERV. A disulfide bridge connects residues cysteine 40 and cysteine 43. The helical transmembrane segment at 49–64 threads the bilayer; that stretch reads AMMGIAFAALLGAIAP. Residues 65 to 71 are Cytoplasmic-facing; that stretch reads QYAIIRW. The helical transmembrane segment at 72–89 threads the bilayer; the sequence is AGLIAWGYSAVRGLQLSI. At 90-144 the chain is on the periplasmic side; that stretch reads EHVGYQFNPSPFATCDLFVQFPNWAPLNKWVPWMFEAYGNCAEVVWTFLGQSMPQ. Cysteines 104 and 130 form a disulfide. A helical transmembrane segment spans residues 145–163; it reads WLVIIFAGNLVALALIVIA. Residues 164 to 176 are Cytoplasmic-facing; it reads QFFSKKTNTILDM.

Belongs to the DsbB family.

It is found in the cell inner membrane. Its function is as follows. Required for disulfide bond formation in some periplasmic proteins. Acts by oxidizing the DsbA protein. In Photobacterium profundum (strain SS9), this protein is Disulfide bond formation protein B.